Consider the following 85-residue polypeptide: Putative membrane protein insertion efficiency factor (85 aa).

The protein belongs to the UPF0161 family.

It localises to the cell inner membrane. Its function is as follows. Could be involved in insertion of integral membrane proteins into the membrane. The sequence is that of Putative membrane protein insertion efficiency factor from Escherichia coli O6:H1 (strain CFT073 / ATCC 700928 / UPEC).